Reading from the N-terminus, the 352-residue chain is MTVLNGMEPLAGDMTVVIAGITDSPVGYAGVDGDEQWATEIRRLTRLRGATVLAHNYQLPAIQDIADYVGDSLALSRIAAEVPEETIVFCGVHFMAETAKILSPNKTVLIPDQRAGCSLADSITPDELCAWKDEHPGAAVVSYVNTTAEVKALTDICCTSSNAVDVVESIDPSREVLFCPDQFLGAHVRRVTGRKNVYVWMGECHVHAGINGDELVDQARANPDAELFVHPECGCSTSALYLAGEGAFPPDRVKILSTGGMLTAARQTQYRKILVATEVGMLYQLRRAAPEIDFRAVNDRASCKYMKMITPGALLRCLVEGTDEVHVDSEIAAAGRRSVQRMIEIGLPGGGE.

The iminosuccinate site is built by His-55 and Ser-72. Cys-117 provides a ligand contact to [4Fe-4S] cluster. Iminosuccinate contacts are provided by residues 143–145 (YVN) and Ser-160. Cys-204 contacts [4Fe-4S] cluster. Iminosuccinate-binding positions include 230 to 232 (HPE) and Thr-258. Cys-303 contributes to the [4Fe-4S] cluster binding site.

It belongs to the quinolinate synthase family. Type 2 subfamily. [4Fe-4S] cluster is required as a cofactor.

The protein resides in the cytoplasm. The catalysed reaction is iminosuccinate + dihydroxyacetone phosphate = quinolinate + phosphate + 2 H2O + H(+). The protein operates within cofactor biosynthesis; NAD(+) biosynthesis; quinolinate from iminoaspartate: step 1/1. In terms of biological role, catalyzes the condensation of iminoaspartate with dihydroxyacetone phosphate to form quinolinate. The chain is Quinolinate synthase from Mycobacterium leprae (strain Br4923).